We begin with the raw amino-acid sequence, 602 residues long: MSRLKRIAGQDLRAGFKAGGRDCGTSVPQGLLKAARKSGQLNLSGRNLSEVPQCVWRINVDIPEEANQNLSFGATERWWEQTDLTKLIISNNKLQSLTDDLRLLPALTVLDIHDNQLTSLPSAIRELENLQKLNVSHNKLKILPEEITNLRNLKCLYLQHNELTCISEGFEQLSNLEDLDLSNNHLTTVPASFSSLSSLVRLNLSSNELKSLPAEINRMKRLKHLDCNSNLLETIPPELAGMESLELLYLRRNKLRFLPEFPSCSLLKELHVGENQIEMLEAEHLKHLNSILVLDLRDNKLKSVPDEIILLRSLERLDLSNNDISSLPYSLGNLHLKFLALEGNPLRTIRREIISKGTQEVLKYLRSKIKDDGPSQSESATETAMTLPSESRVNIHAIITLKILDYSDKQATLIPDEVFDAVKSNIVTSINFSKNQLCEIPKRMVELKEMVSDVDLSFNKLSFISLELCVLQKLTFLDLRNNFLNSLPEEMESLVRLQTINLSFNRFKMLPEVLYRIFTLETILISNNQVGSVDPQKMKMMENLTTLDLQNNDLLQIPPELGNCVNLRTLLLDGNPFRVPRAAILMKGTAAILEYLRDRIPT.

The residue at position 71 (Ser71) is a Phosphoserine. LRR repeat units follow at residues 83–104 (DLTK…LRLL), 106–127 (ALTV…IREL), 129–150 (NLQK…ITNL), 152–173 (NLKC…FEQL), 175–196 (NLED…FSSL), 198–219 (SLVR…INRM), 221–242 (RLKH…LAGM), 244–265 (SLEL…PSCS), 266–286 (LLKE…EHLK), 290–311 (SILV…IILL), 313–335 (SLER…GNLH), 336–356 (LKFL…IISK), 400–421 (TLKI…VFDA), 426–447 (IVTS…MVEL), 450–472 (MVSD…CVLQ), 473–494 (KLTF…MESL), 496–517 (RLQT…LYRI), 519–540 (TLET…KMKM), 543–564 (NLTT…LGNC), and 566–586 (NLRT…AILM).

The polypeptide is Leucine-rich repeat-containing protein 40 (LRRC40) (Homo sapiens (Human)).